Reading from the N-terminus, the 153-residue chain is Insulin-like growth factor 1 (153 aa).

Residues 49–77 are b; that stretch reads GPETLCGAELVDALQFVCGPRGFYFNKPT. 3 disulfide bridges follow: cysteine 54/cysteine 96, cysteine 66/cysteine 109, and cysteine 95/cysteine 100. The interval 78 to 89 is c; that stretch reads GYGSSIRRAPQT. Residues 90–110 form an a region; sequence GIVDECCFRSCDLRRLEMYCA. The interval 111–118 is d; the sequence is PLKPTKSA. The propeptide at 119–153 is e peptide; it reads RSIRAQRHTDMPKTQKEVHLKNTSRGSAGNKTYRM. The tract at residues 119–153 is disordered; that stretch reads RSIRAQRHTDMPKTQKEVHLKNTSRGSAGNKTYRM. Residues 125-138 are compositionally biased toward basic and acidic residues; that stretch reads RHTDMPKTQKEVHL. The span at 139-153 shows a compositional bias: polar residues; the sequence is KNTSRGSAGNKTYRM.

This sequence belongs to the insulin family. Forms a ternary complex with IGFR1 and ITGAV:ITGB3. Forms a ternary complex with IGFR1 and ITGA6:ITGB4. Forms a ternary complex with IGFBP3 and ALS.

The protein localises to the secreted. The insulin-like growth factors, isolated from plasma, are structurally and functionally related to insulin but have a much higher growth-promoting activity. May be a physiological regulator of [1-14C]-2-deoxy-D-glucose (2DG) transport and glycogen synthesis in osteoblasts. Stimulates glucose transport in bone-derived osteoblastic (PyMS) cells and is effective at much lower concentrations than insulin, not only regarding glycogen and DNA synthesis but also with regard to enhancing glucose uptake. May play a role in synapse maturation. Ca(2+)-dependent exocytosis of IGF1 is required for sensory perception of smell in the olfactory bulb. Acts as a ligand for IGF1R. Binds to the alpha subunit of IGF1R, leading to the activation of the intrinsic tyrosine kinase activity which autophosphorylates tyrosine residues in the beta subunit thus initiating a cascade of down-stream signaling events leading to activation of the PI3K-AKT/PKB and the Ras-MAPK pathways. Binds to integrins ITGAV:ITGB3 and ITGA6:ITGB4. Its binding to integrins and subsequent ternary complex formation with integrins and IGFR1 are essential for IGF1 signaling. Induces the phosphorylation and activation of IGFR1, MAPK3/ERK1, MAPK1/ERK2 and AKT1. As part of the MAPK/ERK signaling pathway, acts as a negative regulator of apoptosis in cardiomyocytes via promotion of STUB1/CHIP-mediated ubiquitination and degradation of ICER-type isoforms of CREM. The protein is Insulin-like growth factor 1 of Rattus norvegicus (Rat).